A 538-amino-acid polypeptide reads, in one-letter code: MRTKYIFITGGVLSSLGKGLAAASIAAVLECRGLRVTNQKLDPYINVDPGTMSPFQHGEVFVTDDGAETDLDLGHYERFTSTRMGKSNNLTTGQVYFSVITKERRGDYLGKTVQVIPHITNEIKDYIRQSSEGFDVALIEIGGTVGDIESLPFLEAIRQFRNEVGKQNAIFIHLTWVPFIKTAGEVKTKPTQHSVKALREIGIQPDILLCRTEEFLSEDIKAKIALFCNVEEAAVFTAKDVSCIYEVPLIYHREGLDQKIVDLLNIWTGQPHLEAWENVVQKITSPSYEVNIAIVGKYVNLTDSYKSLNEALVHGGIGNDCQVNLRFVDSEKIEKDGLNHQLENVDGILVPGGFGNRGIEGMIQVIRYARENKVPFFGICLGMQMAVVEFARHVCGLEKANSSEFDENTPHPVIDLLPEQKAVQEMGASMRLGSYPCRLSDASLACEAYGEVEIGERHRHRYEFNRDYQERLEACGLRITGRSPDGRLVEIVEIKDHPWFLGCQFHPEFKSRPTEPHPLFQRFIEAALRYRKKRAEDQ.

Residues Met1–Ile266 are amidoligase domain. Ser14 is a binding site for CTP. UTP is bound at residue Ser14. ATP is bound by residues Ser15–Leu20 and Asp72. Mg(2+) is bound by residues Asp72 and Glu140. CTP contacts are provided by residues Asp147–Glu149, Lys187–Gln192, and Lys223. Residues Lys187–Gln192 and Lys223 each bind UTP. Lys239 to Val241 is an ATP binding site. Residues Asn291–Lys533 form the Glutamine amidotransferase type-1 domain. Gly353 is an L-glutamine binding site. Catalysis depends on Cys380, which acts as the Nucleophile; for glutamine hydrolysis. L-glutamine is bound by residues Leu381–Gln384, Glu404, and Arg461. Catalysis depends on residues His506 and Glu508.

This sequence belongs to the CTP synthase family. Homotetramer.

It catalyses the reaction UTP + L-glutamine + ATP + H2O = CTP + L-glutamate + ADP + phosphate + 2 H(+). The enzyme catalyses L-glutamine + H2O = L-glutamate + NH4(+). It carries out the reaction UTP + NH4(+) + ATP = CTP + ADP + phosphate + 2 H(+). It participates in pyrimidine metabolism; CTP biosynthesis via de novo pathway; CTP from UDP: step 2/2. Allosterically activated by GTP, when glutamine is the substrate; GTP has no effect on the reaction when ammonia is the substrate. The allosteric effector GTP functions by stabilizing the protein conformation that binds the tetrahedral intermediate(s) formed during glutamine hydrolysis. Inhibited by the product CTP, via allosteric rather than competitive inhibition. Catalyzes the ATP-dependent amination of UTP to CTP with either L-glutamine or ammonia as the source of nitrogen. Regulates intracellular CTP levels through interactions with the four ribonucleotide triphosphates. The sequence is that of CTP synthase from Syntrophus aciditrophicus (strain SB).